The sequence spans 302 residues: MFQSSRLVALGLCAALVLVGGSIILSGLSPNLSSPMAAAARASSSALVALPGGRMIEVPHMTKDYRDVKVCSRQRKWEIREHMRDPIKMGLMGTKAGMTTYYDDEGIAHPVTVIALEAGNVVTQVKTKETDGYDAVQLAYKETRDRTIPWPERQHLRKHGNVKAMKHLKEFKIADVSEFTPGQQLKAEELFEVGDLVDVSGTSSGKGFQGSIRRWGMKRGPMSHGSKSHRQHGSIGCSATPSRVYKGLKMAGRMGNERKTVKKLPVMMVNDEEKYIVVRGSVPGKKGTIVELRPTKIVGKHC.

Residues 1-36 (MFQSSRLVALGLCAALVLVGGSIILSGLSPNLSSPM) constitute a chloroplast transit peptide. The tract at residues 208-239 (FQGSIRRWGMKRGPMSHGSKSHRQHGSIGCSA) is disordered.

This sequence belongs to the universal ribosomal protein uL3 family. As to quaternary structure, part of the 50S ribosomal subunit.

It is found in the plastid. Its subcellular location is the chloroplast. Functionally, one of the primary rRNA binding proteins, it binds directly near the 3'-end of the 23S rRNA, where it nucleates assembly of the 50S subunit. In Bigelowiella natans (Pedinomonas minutissima), this protein is Large ribosomal subunit protein uL3c (RPL3).